The sequence spans 614 residues: Zinc metalloproteinase-disintegrin-like protein F1 (614 aa).

The first 20 residues, 1 to 20 (MLQVLLVTICLAVFPYQGSS), serve as a signal peptide directing secretion. Residues 21–192 (IILESGNVND…IKASQFILTP (172 aa)) constitute a propeptide that is removed on maturation. The Cys-switch; controls maturation signature appears at 167–173 (PKKCGVT). Glutamate 193 is modified (pyrrolidone carboxylic acid (Glu)). Residues 202–398 (KYIKLAIVVD…HTPRCILNEP (197 aa)) enclose the Peptidase M12B domain. N-linked (GlcNAc...) asparagine glycosylation occurs at asparagine 221. 3 disulfides stabilise this stretch: cysteine 313/cysteine 393, cysteine 353/cysteine 377, and cysteine 355/cysteine 360. Histidine 338 is a binding site for Zn(2+). Residues 338 to 349 (HELGHNLGINHD) carry the Metal-binding motif. The active-site Proton acceptor is glutamate 339. The Zn(2+) site is built by histidine 342 and histidine 348. The 87-residue stretch at 406–492 (PAVCGNYVVE…ECPMDHIQKN (87 aa)) folds into the Disintegrin domain. The Ca(2+) site is built by valine 408, asparagine 411, glutamate 415, glutamate 418, and aspartate 421. Disulfide bonds link cysteine 409-cysteine 438, cysteine 420-cysteine 433, cysteine 422-cysteine 428, cysteine 432-cysteine 455, cysteine 446-cysteine 452, cysteine 451-cysteine 477, cysteine 464-cysteine 484, cysteine 471-cysteine 503, cysteine 496-cysteine 508, cysteine 515-cysteine 565, cysteine 530-cysteine 575, cysteine 543-cysteine 553, cysteine 560-cysteine 601, and cysteine 595-cysteine 607. The D/ECD-tripeptide signature appears at 470–472 (ECD). Aspartate 472, glutamate 475, and aspartate 487 together coordinate Ca(2+). N-linked (GlcNAc...) asparagine glycosylation is present at asparagine 534.

This sequence belongs to the venom metalloproteinase (M12B) family. P-III subfamily. P-IIIa sub-subfamily. In terms of assembly, monomer. The cofactor is Zn(2+). In terms of processing, N-glycosylated. Post-translationally, the N-terminus is blocked. In terms of tissue distribution, expressed by the venom gland (at protein level). Expressed by the venom gland.

It localises to the secreted. With respect to regulation, the alpha-fibrinogenase activity is inhibited by EDTA, but not by pefabloc. Functionally, zinc metalloprotease that has fibrinogenolytic activity. Does not have hemorrhagic activity in rats. Cleaves insulin B chain at '38-Ala-|-Leu-39' and '40-Tyr-|-Leu-41' bonds. Hydrolyzes only partially and weakly isolated extracellular matrix (ECM) bovine fibronectin and basal membrane (BM) protein human collagen IV in vitro. Murine laminin is not hydrolyzed, neither isolated nor in a solubilized BM preparation. Nidogen is hydrolyzed at '350-Ser-|-Phe-351' bond in a solubilized BM preparation. Hydrolyzes plasma proteins involved in blood coagulation in vitro. Has alpha-fibrinogenase activity cleaving human fibrinogen alpha chain at '432-Lys-|-Leu-433' bond, but does not cleave beta or gamma chains. Does not cleave fibrin. Hydrolyzes only partially bovine prothrombin at '200-Ser-|-Gly-201' bond, factor X (FX) heavy chain, and very slowly, FX light chain and plasminogen in vitro, without activating any of them. Has no effect in plasma thrombin generation. Does not inhibit platelet aggregation induced by collagen in vitro. May have a delayed pathological action as an anticoagulant in envenomed patients after they received serotherapy as it is not recognized by the venom antiserum. The sequence is that of Zinc metalloproteinase-disintegrin-like protein F1 from Vipera ammodytes ammodytes (Western sand viper).